Reading from the N-terminus, the 651-residue chain is Cysteine-rich receptor-like protein kinase 42 (651 aa).

Positions 1–28 (MRCLTKTRSFHYVIIFYSFFFLPFLSSS) are cleaved as a signal peptide. Over 29–251 (SDDQRTTVSG…HHKFHVLFNK (223 aa)) the chain is Extracellular. Gnk2-homologous domains follow at residues 35-135 (TVSG…TYEF) and 137-236 (DESV…DHKF). N-linked (GlcNAc...) asparagine glycans are attached at residues Asn-79 and Asn-151. A helical membrane pass occupies residues 252–272 (GVIVAIVLTTSAFVMLILLAT). Topologically, residues 273-651 (YVIMTKVSKT…SSESSTTRTI (379 aa)) are cytoplasmic. The region spanning 315 to 604 (FSHKKMLGQG…IPSPTSPPFL (290 aa)) is the Protein kinase domain. Residues 321 to 329 (LGQGGNGTV) and Lys-343 each bind ATP. The residue at position 388 (Tyr-388) is a Phosphotyrosine. Catalysis depends on Asp-440, which acts as the Proton acceptor. 2 positions are modified to phosphoserine: Ser-444 and Ser-473. Phosphothreonine is present on residues Thr-474 and Thr-479. At Tyr-487 the chain carries Phosphotyrosine.

This sequence belongs to the protein kinase superfamily. Ser/Thr protein kinase family. CRK subfamily.

It localises to the membrane. It catalyses the reaction L-seryl-[protein] + ATP = O-phospho-L-seryl-[protein] + ADP + H(+). The catalysed reaction is L-threonyl-[protein] + ATP = O-phospho-L-threonyl-[protein] + ADP + H(+). This chain is Cysteine-rich receptor-like protein kinase 42 (CRK42), found in Arabidopsis thaliana (Mouse-ear cress).